The primary structure comprises 357 residues: Arginine kinase Scy p 2.0101 (357 aa).

In terms of domain architecture, Phosphagen kinase N-terminal spans Lys-9–Lys-91. Position 64-68 (Gly-64–Tyr-68) interacts with L-arginine. IgE-binding and beta-hexosaminidase release from rat basophilic leukemia (RBL) cells stretches follow at residues Val-113 to Cys-127 and Cys-127 to Thr-155. The Phosphagen kinase C-terminal domain maps to Phe-119–Met-356. Ser-122 to Arg-126 contacts ATP. His-185 lines the ATP pocket. Cys-201 and Cys-271 are disulfide-bonded. An igE-binding and beta-hexosaminidase release from rat basophilic leukemia (RBL) cells region spans residues Trp-204 to Phe-218. Residues Tyr-211–Glu-225 are igE-binding, but no beta-hexosaminidase release from rat basophilic leukemia (RBL) cells. Glu-225 contributes to the L-arginine binding site. Arg-229 serves as a coordination point for ATP. An L-arginine-binding site is contributed by Cys-271. ATP contacts are provided by residues Arg-280–His-284 and Arg-309–Glu-314. Residue Glu-314 coordinates L-arginine. The tract at residues Thr-316 to Arg-330 is igE-binding, but no beta-hexosaminidase release from rat basophilic leukemia (RBL) cells.

It belongs to the ATP:guanido phosphotransferase family. Glycosylated. As to expression, muscle (at protein level).

It carries out the reaction L-arginine + ATP = N(omega)-phospho-L-arginine + ADP + H(+). In terms of biological role, catalyzes the reversible transfer of high energy ATP gamma-phosphate group to L-arginine. This Scylla paramamosain (Mud crab) protein is Arginine kinase Scy p 2.0101.